We begin with the raw amino-acid sequence, 83 residues long: Sec-independent protein translocase protein TatA (83 aa).

Residues 1–21 (MGSLSPWHWAILAVVVIVLFG) form a helical membrane-spanning segment. Residues 48–83 (NENKAEASIETPTPVQSQRVDPSAASGQDSTEARPA) are disordered. Residues 57–77 (ETPTPVQSQRVDPSAASGQDS) show a composition bias toward polar residues.

Belongs to the TatA/E family. The Tat system comprises two distinct complexes: a TatABC complex, containing multiple copies of TatA, TatB and TatC subunits, and a separate TatA complex, containing only TatA subunits. Substrates initially bind to the TatABC complex, which probably triggers association of the separate TatA complex to form the active translocon.

It is found in the cell membrane. In terms of biological role, part of the twin-arginine translocation (Tat) system that transports large folded proteins containing a characteristic twin-arginine motif in their signal peptide across membranes. TatA could form the protein-conducting channel of the Tat system. This Mycobacterium bovis (strain BCG / Pasteur 1173P2) protein is Sec-independent protein translocase protein TatA.